The primary structure comprises 568 residues: Urease subunit alpha (568 aa).

Positions 133 to 568 (GGVDTHIHFI…LPLAQKYFLF (436 aa)) constitute a Urease domain. 3 residues coordinate Ni(2+): histidine 138, histidine 140, and lysine 221. Position 221 is an N6-carboxylysine (lysine 221). Histidine 223 lines the substrate pocket. Residues histidine 250 and histidine 276 each coordinate Ni(2+). Histidine 324 acts as the Proton donor in catalysis. Aspartate 364 is a Ni(2+) binding site.

This sequence belongs to the metallo-dependent hydrolases superfamily. Urease alpha subunit family. In terms of assembly, heterohexamer of 3 UreC (alpha) and 3 UreAB (gamma/beta) subunits. Requires Ni cation as cofactor. Post-translationally, carboxylation allows a single lysine to coordinate two nickel ions.

The protein localises to the cytoplasm. It carries out the reaction urea + 2 H2O + H(+) = hydrogencarbonate + 2 NH4(+). It participates in nitrogen metabolism; urea degradation; CO(2) and NH(3) from urea (urease route): step 1/1. This Deinococcus radiodurans (strain ATCC 13939 / DSM 20539 / JCM 16871 / CCUG 27074 / LMG 4051 / NBRC 15346 / NCIMB 9279 / VKM B-1422 / R1) protein is Urease subunit alpha.